The sequence spans 34 residues: Photosystem II reaction center protein M (34 aa).

A helical membrane pass occupies residues 5-25 (ILAVIATALFVLIPTAFLLIL).

This sequence belongs to the PsbM family. As to quaternary structure, PSII is composed of 1 copy each of membrane proteins PsbA, PsbB, PsbC, PsbD, PsbE, PsbF, PsbH, PsbI, PsbJ, PsbK, PsbL, PsbM, PsbT, PsbX, PsbY, PsbZ, Psb30/Ycf12, at least 3 peripheral proteins of the oxygen-evolving complex and a large number of cofactors. It forms dimeric complexes.

It is found in the plastid. Its subcellular location is the chloroplast thylakoid membrane. Functionally, one of the components of the core complex of photosystem II (PSII). PSII is a light-driven water:plastoquinone oxidoreductase that uses light energy to abstract electrons from H(2)O, generating O(2) and a proton gradient subsequently used for ATP formation. It consists of a core antenna complex that captures photons, and an electron transfer chain that converts photonic excitation into a charge separation. This subunit is found at the monomer-monomer interface. In Chaetosphaeridium globosum (Charophycean green alga), this protein is Photosystem II reaction center protein M.